Consider the following 222-residue polypeptide: Protein-L-isoaspartate O-methyltransferase (222 aa).

Serine 69 is an active-site residue.

This sequence belongs to the methyltransferase superfamily. L-isoaspartyl/D-aspartyl protein methyltransferase family.

It localises to the cytoplasm. The enzyme catalyses [protein]-L-isoaspartate + S-adenosyl-L-methionine = [protein]-L-isoaspartate alpha-methyl ester + S-adenosyl-L-homocysteine. Functionally, catalyzes the methyl esterification of L-isoaspartyl residues in peptides and proteins that result from spontaneous decomposition of normal L-aspartyl and L-asparaginyl residues. It plays a role in the repair and/or degradation of damaged proteins. The chain is Protein-L-isoaspartate O-methyltransferase from Nitrosomonas europaea (strain ATCC 19718 / CIP 103999 / KCTC 2705 / NBRC 14298).